Reading from the N-terminus, the 252-residue chain is 2-succinyl-6-hydroxy-2,4-cyclohexadiene-1-carboxylate synthase (252 aa).

It belongs to the AB hydrolase superfamily. MenH family. As to quaternary structure, monomer.

It catalyses the reaction 5-enolpyruvoyl-6-hydroxy-2-succinyl-cyclohex-3-ene-1-carboxylate = (1R,6R)-6-hydroxy-2-succinyl-cyclohexa-2,4-diene-1-carboxylate + pyruvate. Its pathway is quinol/quinone metabolism; 1,4-dihydroxy-2-naphthoate biosynthesis; 1,4-dihydroxy-2-naphthoate from chorismate: step 3/7. It participates in quinol/quinone metabolism; menaquinone biosynthesis. Functionally, catalyzes a proton abstraction reaction that results in 2,5-elimination of pyruvate from 2-succinyl-5-enolpyruvyl-6-hydroxy-3-cyclohexene-1-carboxylate (SEPHCHC) and the formation of 2-succinyl-6-hydroxy-2,4-cyclohexadiene-1-carboxylate (SHCHC). The polypeptide is 2-succinyl-6-hydroxy-2,4-cyclohexadiene-1-carboxylate synthase (Salmonella typhimurium (strain LT2 / SGSC1412 / ATCC 700720)).